Consider the following 1285-residue polypeptide: Ataxin-2 (1285 aa).

3 disordered regions span residues 1–85 (MRSS…PGSR), 111–178 (ARAC…SPGA), and 197–224 (PVAS…GLPQ). A compositionally biased stretch (basic residues) spans 29–38 (SLPRTARRGG). The span at 48–65 (AGPPPRGPGAPPRGPRSP) shows a compositional bias: pro residues. Over residues 128-144 (SSSARPAPGCPRPACEP) the composition is skewed to low complexity. The segment covering 205–214 (AGGGRPGLGR) has biased composition (gly residues). Residues S218 and S219 each carry the phosphoserine modification. In terms of domain architecture, Sm spans 237 to 314 (RMVHILTSVV…FVVVQFKDTD (78 aa)). A phosphoserine mark is found at S362 and S435. Composition is skewed to basic and acidic residues over residues 428–440 (ALEN…EEKY) and 447–461 (CSDR…RDNK). Disordered stretches follow at residues 428-925 (ALEN…HQQP) and 1111-1191 (AALH…QSSF). S477 bears the Phosphoserine mark. Residues 498-510 (ASHTSDFNPNAGS) show a composition bias toward polar residues. S523 carries the post-translational modification Phosphoserine. Positions 526-552 (PSHSSRPPSRYQSGPNSLPPRAATHTR) are enriched in low complexity. Positions 554-567 (PSRPPSRPSRPPSH) are enriched in pro residues. At S593 the chain carries Phosphoserine. Over residues 596 to 606 (AQRHPRNHRVS) the composition is skewed to basic residues. Position 609 is an asymmetric dimethylarginine; alternate (R609). R609 carries the post-translational modification Omega-N-methylarginine; alternate. A phosphoserine mark is found at S611 and S653. Positions 662-672 (PRQSSIGNSPS) are enriched in polar residues. Over residues 685-694 (PAEAVSMPVP) the composition is skewed to low complexity. S697 bears the Phosphoserine mark. T710 carries the phosphothreonine modification. The segment covering 737–746 (ASETSPSFSK) has biased composition (polar residues). S741 and S753 each carry phosphoserine. Over residues 757–773 (SEHRKQIDDLKKFKNDF) the composition is skewed to basic and acidic residues. Residues 776–789 (QPSSTSESMDQLLS) are compositionally biased toward polar residues. Over residues 790–813 (KNREGEKSRDLIKDKTEASAKDSF) the composition is skewed to basic and acidic residues. Positions 814 to 838 (IDSSSSSSNCTSGSSKTNSPSISPS) are enriched in low complexity. Phosphoserine is present on residues S827, S828, S832, S836, S838, S859, and S860. Residues 851–862 (VTSQGVQTSSPA) are compositionally biased toward polar residues. Residue K864 forms a Glycyl lysine isopeptide (Lys-Gly) (interchain with G-Cter in SUMO2) linkage. Over residues 864–881 (KQEKDDREEKKDTTEQVR) the composition is skewed to basic and acidic residues. 2 stretches are compositionally biased toward low complexity: residues 896–907 (SFSQPKPSTTPT) and 1128–1165 (GQQQ…QQSA).

It belongs to the ataxin-2 family. In terms of assembly, interacts with RBFOX1. Monomer. Can also form homodimers. Interacts with polyribosomes. Interacts with EGFR. Interacts with SH3GL3. Interacts with SH3GL2, SH3KBP1 and CBL. Interacts with ATXN2L. As to expression, expressed in the heart, lung, liver, kidney, skeletal muscle, spleen and intestine. Predominant expression was seen in the brain where a high level expression was found in the pyramidal cortical neurons, large brain stem neurons and cerebellar Purkinje cells. All three isoforms were found in all the tissues except skeletal muscle where only isoform 1 was found.

The protein resides in the cytoplasm. In terms of biological role, involved in EGFR trafficking, acting as negative regulator of endocytic EGFR internalization at the plasma membrane. The protein is Ataxin-2 (Atxn2) of Mus musculus (Mouse).